A 233-amino-acid polypeptide reads, in one-letter code: MSQSNRELVVDFLSYKLSQKGYSWSQFTDVEENRTEAPEGTESEAETPSAINGNPSWHLADSPAVNGATGHSSSLDAREVIPMAAVKQALREAGDEFELRYRRAFSDLTSQLHITPGTAYQSFEQVLNELFRDGVNWGRIVAFFSFGGALCVESVDKEMQVLVSRIATWMATYLNDHLEPWIQENGGWDTFVELYGNNAAAESRKGQERFNRWFLTGMTLAGVVLLGSLFSRK.

A BH4 motif is present at residues 4 to 24 (SNRELVVDFLSYKLSQKGYSW). Residues 29–71 (DVEENRTEAPEGTESEAETPSAINGNPSWHLADSPAVNGATGH) are disordered. The residue at position 49 (serine 49) is a Phosphoserine; by PLK3. Phosphoserine; by CDK1 is present on serine 62. Residues 86-100 (VKQALREAGDEFELR) carry the BH3 motif. A BH1 motif is present at residues 129 to 148 (ELFRDGVNWGRIVAFFSFGG). Residues 180 to 195 (PWIQENGGWDTFVELY) carry the BH2 motif. The chain crosses the membrane as a helical span at residues 210 to 226 (FNRWFLTGMTLAGVVLL).

It belongs to the Bcl-2 family. As to quaternary structure, homodimer. Heterodimers with BAX, BAK or BCL2. Heterodimerization with BAX does not seem to be required for anti-apoptotic activity. Interacts with BCL2L11. Interacts with BAD. Interacts with SIVA1 isoform 1; the interaction inhibits the anti-apoptotic activity. Interacts with BECN1 and PGAM5. Interacts with IKZF3. Interacts with HEBP2. Interacts with BOP. Interacts with p53/TP53 and BBC3; interaction with BBC3 disrupts the interaction with p53/TP53. Interacts with DNM1L and CLTA; DNM1L and BCL2L1 may form a complex in synaptic vesicles that also contains clathrin and MFF. Interacts with ATP5F1A and ATP5F1B; the interactions mediate the association of BCL2L1 with the mitochondrial membrane ATP synthase F(1)F(0) ATP synthase. Interacts with VDAC1. Interacts (via the loop between motifs BH4 and BH3) with NLRP1 (via LRR repeats), but not with NLRP2, NLRP3, NLRP4, PYCARD, nor MEFV. Interacts with BCL2L11 (via BH3). Interacts with RNF183. Interacts with GIMAP3/IAN4. Interacts with GIMAP5 and HSPA8/HSC70; the interaction between HSPA8 and BCL2L1 is impaired in the absence of GIMAP5. Interacts with CLU (isoform 4); this interaction releases and activates BAX and promotes cell death. Post-translationally, proteolytically cleaved by caspases during apoptosis. The cleaved protein, lacking the BH4 motif, has pro-apoptotic activity. In terms of processing, phosphorylated on Ser-62 by CDK1. This phosphorylation is partial in normal mitotic cells, but complete in G2-arrested cells upon DNA-damage, thus promoting subsequent apoptosis probably by triggering caspases-mediated proteolysis. Phosphorylated by PLK3, leading to regulate the G2 checkpoint and progression to cytokinesis during mitosis. Phosphorylation at Ser-49 appears during the S phase and G2, disappears rapidly in early mitosis during prometaphase, metaphase and early anaphase, and re-appears during telophase and cytokinesis. Ubiquitinated by RNF183 during prolonged ER stress, leading to degradation by the proteosome.

It is found in the mitochondrion membrane. The protein resides in the nucleus membrane. It localises to the mitochondrion matrix. Its subcellular location is the cytoplasm. The protein localises to the cytoskeleton. It is found in the microtubule organizing center. The protein resides in the centrosome. It localises to the cytosol. Its subcellular location is the cytoplasmic vesicle. The protein localises to the secretory vesicle. It is found in the synaptic vesicle membrane. Its function is as follows. Potent inhibitor of cell death. Inhibits activation of caspases. Appears to regulate cell death by blocking the voltage-dependent anion channel (VDAC) by binding to it and preventing the release of the caspase activator, CYC1, from the mitochondrial membrane. Also acts as a regulator of G2 checkpoint and progression to cytokinesis during mitosis. Regulates presynaptic plasticity, including neurotransmitter release and recovery, number of axonal mitochondria as well as size and number of synaptic vesicle clusters. During synaptic stimulation, increases ATP availability from mitochondria through regulation of mitochondrial membrane ATP synthase F(1)F(0) activity and regulates endocytic vesicle retrieval in hippocampal neurons through association with DMN1L and stimulation of its GTPase activity in synaptic vesicles. May attenuate inflammation impairing NLRP1-inflammasome activation, hence CASP1 activation and IL1B release. The chain is Bcl-2-like protein 1 (BCL2L1) from Sus scrofa (Pig).